A 292-amino-acid chain; its full sequence is Outer membrane protein assembly factor BamD (292 aa).

The first 26 residues, 1–26 (MIQRPTFFTPTHLLAMLLATFVLITG), serve as a signal peptide directing secretion. Residue cysteine 27 is the site of N-palmitoyl cysteine attachment. Residue cysteine 27 is the site of S-diacylglycerol cysteine attachment.

Belongs to the BamD family. As to quaternary structure, part of the Bam complex.

It localises to the cell outer membrane. Part of the outer membrane protein assembly complex, which is involved in assembly and insertion of beta-barrel proteins into the outer membrane. This Xylella fastidiosa (strain 9a5c) protein is Outer membrane protein assembly factor BamD.